The primary structure comprises 101 residues: UPF0473 protein MGAS10750_Spy1887 (101 aa).

This sequence belongs to the UPF0473 family.

The chain is UPF0473 protein MGAS10750_Spy1887 from Streptococcus pyogenes serotype M4 (strain MGAS10750).